Consider the following 434-residue polypeptide: 23S rRNA (uracil(1939)-C(5))-methyltransferase RlmD (434 aa).

The TRAM domain maps to 10–68 (RVTTRQIITVTVNDLDPFGQGVARHQGKALFVSGVLPHEQAEVVLVEDKKQYARAEVKR). 4 residues coordinate [4Fe-4S] cluster: Cys-81, Cys-87, Cys-90, and Cys-162. S-adenosyl-L-methionine is bound by residues Gln-265, Phe-294, Asn-299, Glu-315, Asn-342, and Asp-363. Cys-389 (nucleophile) is an active-site residue.

Belongs to the class I-like SAM-binding methyltransferase superfamily. RNA M5U methyltransferase family. RlmD subfamily.

The catalysed reaction is uridine(1939) in 23S rRNA + S-adenosyl-L-methionine = 5-methyluridine(1939) in 23S rRNA + S-adenosyl-L-homocysteine + H(+). Its function is as follows. Catalyzes the formation of 5-methyl-uridine at position 1939 (m5U1939) in 23S rRNA. This Klebsiella pneumoniae subsp. pneumoniae (strain ATCC 700721 / MGH 78578) protein is 23S rRNA (uracil(1939)-C(5))-methyltransferase RlmD.